A 649-amino-acid chain; its full sequence is Archaeal Lon protease (649 aa).

The Cytoplasmic portion of the chain corresponds to 1 to 114 (MFSIKFKTTE…KLDFKAPSST (114 aa)). 47–54 (GDPGVGKS) contributes to the ATP binding site. Residues 115–135 (TLLLIMIGAILLSEYLLKYLP) form a helical membrane-spanning segment. The Extracellular segment spans residues 136 to 138 (QNY). Residues 139 to 159 (LLAAVTITALIVLIFGFVIIL) form a helical membrane-spanning segment. The Cytoplasmic segment spans residues 160–649 (TSIMGASRAS…DNRGGAERFN (490 aa)). The 184-residue stretch at 456–639 (EPKVGVIYGL…DEIVPLVFDL (184 aa)) folds into the Lon proteolytic domain. Residues Ser-550 and Lys-593 contribute to the active site.

This sequence belongs to the peptidase S16 family. Archaeal LonB subfamily. In terms of assembly, homohexamer. Organized in a ring with a central cavity.

It localises to the cell membrane. Functionally, ATP-dependent serine protease that mediates the selective degradation of mutant and abnormal proteins as well as certain short-lived regulatory proteins. Degrades polypeptides processively. In Methanocaldococcus jannaschii (strain ATCC 43067 / DSM 2661 / JAL-1 / JCM 10045 / NBRC 100440) (Methanococcus jannaschii), this protein is Archaeal Lon protease.